We begin with the raw amino-acid sequence, 115 residues long: U17-barytoxin-Tl1c (115 aa).

Residues 1-20 (MKTIIVFLSLLVLATKFGDA) form the signal peptide. Positions 21 to 74 (KEGVNQKQKKEVTQNEFREEYLNEMAAMSLVQQLEAIERALFENEAGRNSRQKR) are excised as a propeptide. Cystine bridges form between Cys75–Cys89, Cys82–Cys94, and Cys88–Cys109.

This sequence belongs to the neurotoxin 14 (magi-1) family. 03 (ICK-30-40) subfamily. Expressed by the venom gland.

The protein resides in the secreted. Ion channel inhibitor. The sequence is that of U17-barytoxin-Tl1c from Trittame loki (Brush-footed trapdoor spider).